The primary structure comprises 449 residues: Ribulose bisphosphate carboxylase large chain (449 aa).

Residue Lys7 is modified to N6,N6,N6-trimethyllysine. Asn116 and Thr166 together coordinate substrate. The active-site Proton acceptor is Lys168. Lys170 is a binding site for substrate. Residues Lys194, Asp196, and Glu197 each contribute to the Mg(2+) site. Lys194 is subject to N6-carboxylysine. Catalysis depends on His287, which acts as the Proton acceptor. Residues Arg288, His320, and Ser372 each contribute to the substrate site.

This sequence belongs to the RuBisCO large chain family. Type I subfamily. In terms of assembly, heterohexadecamer of 8 large chains and 8 small chains; disulfide-linked. The disulfide link is formed within the large subunit homodimers. Mg(2+) is required as a cofactor. The disulfide bond which can form in the large chain dimeric partners within the hexadecamer appears to be associated with oxidative stress and protein turnover.

The protein resides in the plastid. The protein localises to the chloroplast. It catalyses the reaction 2 (2R)-3-phosphoglycerate + 2 H(+) = D-ribulose 1,5-bisphosphate + CO2 + H2O. The catalysed reaction is D-ribulose 1,5-bisphosphate + O2 = 2-phosphoglycolate + (2R)-3-phosphoglycerate + 2 H(+). Functionally, ruBisCO catalyzes two reactions: the carboxylation of D-ribulose 1,5-bisphosphate, the primary event in carbon dioxide fixation, as well as the oxidative fragmentation of the pentose substrate in the photorespiration process. Both reactions occur simultaneously and in competition at the same active site. The polypeptide is Ribulose bisphosphate carboxylase large chain (Aspidistra elatior (Cast-iron plant)).